Consider the following 153-residue polypeptide: Regulatory protein RecX (153 aa).

Belongs to the RecX family.

The protein resides in the cytoplasm. Modulates RecA activity. In Neisseria gonorrhoeae (strain ATCC 700825 / FA 1090), this protein is Regulatory protein RecX.